A 296-amino-acid polypeptide reads, in one-letter code: Phosphatidylglycerol--prolipoprotein diacylglyceryl transferase (296 aa).

A run of 3 helical transmembrane segments spans residues 17-37, 59-79, and 97-117; these read LAVR…IVVG, MMFY…VLFY, and GGMS…LFAW. Residue arginine 142 participates in a 1,2-diacyl-sn-glycero-3-phospho-(1'-sn-glycerol) binding. 2 helical membrane passes run 230 to 250 and 257 to 277; these read MGAV…TVEF and FLGL…PMIL.

It belongs to the Lgt family.

The protein resides in the cell inner membrane. The catalysed reaction is L-cysteinyl-[prolipoprotein] + a 1,2-diacyl-sn-glycero-3-phospho-(1'-sn-glycerol) = an S-1,2-diacyl-sn-glyceryl-L-cysteinyl-[prolipoprotein] + sn-glycerol 1-phosphate + H(+). It functions in the pathway protein modification; lipoprotein biosynthesis (diacylglyceryl transfer). Catalyzes the transfer of the diacylglyceryl group from phosphatidylglycerol to the sulfhydryl group of the N-terminal cysteine of a prolipoprotein, the first step in the formation of mature lipoproteins. The chain is Phosphatidylglycerol--prolipoprotein diacylglyceryl transferase from Burkholderia lata (strain ATCC 17760 / DSM 23089 / LMG 22485 / NCIMB 9086 / R18194 / 383).